The chain runs to 504 residues: Glycerol kinase (504 aa).

T12 is a binding site for ADP. ATP contacts are provided by T12, T13, and S14. T12 is a binding site for sn-glycerol 3-phosphate. R16 lines the ADP pocket. Positions 82, 83, 134, and 246 each coordinate sn-glycerol 3-phosphate. R82, E83, Y134, D246, and Q247 together coordinate glycerol. Positions 268 and 312 each coordinate ADP. T268, G312, Q316, and G413 together coordinate ATP. G413 and N417 together coordinate ADP.

The protein belongs to the FGGY kinase family.

The catalysed reaction is glycerol + ATP = sn-glycerol 3-phosphate + ADP + H(+). The protein operates within polyol metabolism; glycerol degradation via glycerol kinase pathway; sn-glycerol 3-phosphate from glycerol: step 1/1. Its activity is regulated as follows. Inhibited by fructose 1,6-bisphosphate (FBP). Key enzyme in the regulation of glycerol uptake and metabolism. Catalyzes the phosphorylation of glycerol to yield sn-glycerol 3-phosphate. In Paenarthrobacter aurescens (strain TC1), this protein is Glycerol kinase.